The following is a 437-amino-acid chain: Acyl-coenzyme A thioesterase 2, chloroplastic (437 aa).

Residues 1 to 13 (MDLSSSPNHPITV) constitute a chloroplast transit peptide. HotDog ACOT-type domains follow at residues 89 to 211 (ILYN…RDSK) and 287 to 404 (RDTR…RPEA).

The protein belongs to the acyl coenzyme A hydrolase family. In terms of tissue distribution, mostly expressed at low levels in glandular trichomes (lupulin glands), and, to a lower extent, in stems, leaves, flowers and cones.

It is found in the plastid. Its subcellular location is the chloroplast. Its function is as follows. Acyl-CoA thioesterases are a group of enzymes that catalyze the hydrolysis of acyl-CoAs to the free fatty acid and coenzyme A (CoASH), providing the potential to regulate intracellular levels of acyl-CoAs, free fatty acids and CoASH. This chain is Acyl-coenzyme A thioesterase 2, chloroplastic, found in Humulus lupulus (European hop).